We begin with the raw amino-acid sequence, 256 residues long: NAD-dependent protein deacylase 4 (256 aa).

Residues 1-250 (MRLPAEALKD…AKIHESLSTG (250 aa)) form the Deacetylase sirtuin-type domain. 19–39 (GAGISAESGILTYLDQMPKLW) lines the NAD(+) pocket. Substrate-binding residues include Tyr64 and Arg67. 98–101 (QNVD) contacts NAD(+). The Proton acceptor role is filled by His116. Zn(2+) is bound by residues Cys124, Cys127, Cys152, and Cys155. NAD(+) contacts are provided by residues 192 to 194 (GTS), 218 to 220 (NTV), and Ala236.

This sequence belongs to the sirtuin family. Class III subfamily. The cofactor is Zn(2+).

It is found in the cytoplasm. The catalysed reaction is N(6)-acetyl-L-lysyl-[protein] + NAD(+) + H2O = 2''-O-acetyl-ADP-D-ribose + nicotinamide + L-lysyl-[protein]. It carries out the reaction N(6)-succinyl-L-lysyl-[protein] + NAD(+) + H2O = 2''-O-succinyl-ADP-D-ribose + nicotinamide + L-lysyl-[protein]. NAD-dependent lysine deacetylase and desuccinylase that specifically removes acetyl and succinyl groups on target proteins. Modulates the activities of several proteins which are inactive in their acylated form. This is NAD-dependent protein deacylase 4 from Pseudomonas syringae pv. tomato (strain ATCC BAA-871 / DC3000).